A 492-amino-acid polypeptide reads, in one-letter code: NADH-quinone oxidoreductase subunit N (492 aa).

14 consecutive transmembrane segments (helical) span residues 12–32 (LLPYAPIIAVVITVLVVMIAI), 44–64 (ISVVGLNIGLFILLGQMAGII), 76–96 (LFVIDNFAQFNMVIIFICALA), 115–135 (LYLLMLLSTVGALLMVCAQHL), 138–158 (FFMSLEMLSIPLYGMLSYTYM), 169–189 (YLVLSATASATLLMGMAFIYA), 212–232 (LILGAAMMMFGIAFKLSAAPF), 244–264 (PAPIATYLASVSKVAMMALAV), 272–292 (LLALPSVQMLLMVMATLSILL), 306–326 (LLGYSSIAHMGYVLIVIVSIG), 334–354 (SMYMAIYAFTSIGAFGVVTLM), 381–401 (TAVMTIMMLSLAGIPLTAGFI), 416–438 (WFLAAMIILGSAIGLFYYLRVLL), and 463–483 (IMVIAVTAIIVFFGVLPNSMI).

Belongs to the complex I subunit 2 family. As to quaternary structure, NDH-1 is composed of 14 different subunits. Subunits NuoA, H, J, K, L, M, N constitute the membrane sector of the complex.

Its subcellular location is the cell inner membrane. It catalyses the reaction a quinone + NADH + 5 H(+)(in) = a quinol + NAD(+) + 4 H(+)(out). Functionally, NDH-1 shuttles electrons from NADH, via FMN and iron-sulfur (Fe-S) centers, to quinones in the respiratory chain. The immediate electron acceptor for the enzyme in this species is believed to be ubiquinone. Couples the redox reaction to proton translocation (for every two electrons transferred, four hydrogen ions are translocated across the cytoplasmic membrane), and thus conserves the redox energy in a proton gradient. The chain is NADH-quinone oxidoreductase subunit N from Psychrobacter arcticus (strain DSM 17307 / VKM B-2377 / 273-4).